Here is a 318-residue protein sequence, read N- to C-terminus: Acetyl-coenzyme A carboxylase carboxyl transferase subunit alpha (318 aa).

A CoA carboxyltransferase C-terminal domain is found at 38-292 (KLEKRLAKLE…NKTITKSLHA (255 aa)).

It belongs to the AccA family. Acetyl-CoA carboxylase is a heterohexamer composed of biotin carboxyl carrier protein (AccB), biotin carboxylase (AccC) and two subunits each of ACCase subunit alpha (AccA) and ACCase subunit beta (AccD).

It localises to the cytoplasm. The enzyme catalyses N(6)-carboxybiotinyl-L-lysyl-[protein] + acetyl-CoA = N(6)-biotinyl-L-lysyl-[protein] + malonyl-CoA. Its pathway is lipid metabolism; malonyl-CoA biosynthesis; malonyl-CoA from acetyl-CoA: step 1/1. Functionally, component of the acetyl coenzyme A carboxylase (ACC) complex. First, biotin carboxylase catalyzes the carboxylation of biotin on its carrier protein (BCCP) and then the CO(2) group is transferred by the carboxyltransferase to acetyl-CoA to form malonyl-CoA. The chain is Acetyl-coenzyme A carboxylase carboxyl transferase subunit alpha from Listeria monocytogenes serotype 4b (strain CLIP80459).